We begin with the raw amino-acid sequence, 287 residues long: MTILVLGGRGKTASRLAALLDQAKTPFLVGSSSASPSDPYKSSQFNWLKRDTWERPFEQAGKHGLGTISSIYLVGPPVMDIAPPMIEFVDLARAKGVQRFVLLSASTVEKGGHSMGQVHAYLDSLAEVEYVALRPTWFMENLLEDPSREWIKNENQIITATGDGKIPFVSADDIASVAFHCLTEWGSHKTEYVILGPELLSYGQVAEILTTILGKKIIHRSLTETGLAELLVKKAGIPADFAAMLSAMEVDVKNGPQEVLNNSVVEVTGNPPRYFKDVAEHEKHVWA.

It belongs to the fgaFS/easG family.

The catalysed reaction is festuclavine + NAD(+) = 6,8-dimethyl-6,7-didehydroergoline + NADH + H(+). The protein operates within alkaloid biosynthesis; ergot alkaloid biosynthesis. In terms of biological role, festuclavine synthase; part of the gene cluster that mediates the biosynthesis of isofumigaclavines, fungal ergot alkaloids. The tryptophan dimethylallyltransferase ifgA catalyzes the first step of ergot alkaloid biosynthesis by condensing dimethylallyl diphosphate (DMAP) and tryptophan to form 4-dimethylallyl-L-tryptophan. The second step is catalyzed by the methyltransferase ifgB that methylates 4-dimethylallyl-L-tryptophan in the presence of S-adenosyl-L-methionine, resulting in the formation of N-methyl-dimethylallyl-L-tryptophan. The catalase ifgD and the FAD-dependent oxidoreductase ifgC then transform N-methyl-dimethylallyl-L-tryptophan to chanoclavine-I which is further oxidized by ifgE in the presence of NAD(+), resulting in the formation of chanoclavine-I aldehyde. The chanoclavine-I aldehyde reductases ifgG and/or fgaOx3 reduce chanoclavine-I aldehyde to dihydrochanoclavine-I aldehyde that spontaneously dehydrates to form 6,8-dimethyl-6,7-didehydroergoline. The festuclavine dehydrogenases ifgF1 and/or ifgF2 then catalyze the reduction of 6,8-dimethyl-6,7-didehydroergoline to form festuclavine. Hydrolysis of festuclavine by a yet undetermined cytochrome P450 monooxygenase (called ifgH) then leads to the formation of isofumigaclavine B which is in turn acetylated by ifgI to isofumigaclavine A. Penicillium roqueforti has interestingly at least two sets of genes for the consumption of chanoclavine-I aldehyde on three different loci, the OYEs ifgG/fgaOx3 and the festuclavine synthase homologs ifgF1/ifgF2. The reason for the duplication of these genes is unclear, probably to ensure the conversion of chanoclavine-I aldehyde by differential gene expression under various environmental conditions. This is Festuclavine synthase II from Penicillium roqueforti (strain FM164).